Here is a 1183-residue protein sequence, read N- to C-terminus: DNA-directed RNA polymerase subunit beta (1183 aa).

Acidic residues predominate over residues 1153-1162; it reads DMQDNEEEDV. Residues 1153–1183 form a disordered region; it reads DMQDNEEEDVVERKVDLQQKDAPQSQKEVTD. The span at 1173 to 1183 shows a compositional bias: polar residues; sequence DAPQSQKEVTD.

This sequence belongs to the RNA polymerase beta chain family. In terms of assembly, the RNAP catalytic core consists of 2 alpha, 1 beta, 1 beta' and 1 omega subunit. When a sigma factor is associated with the core the holoenzyme is formed, which can initiate transcription.

The catalysed reaction is RNA(n) + a ribonucleoside 5'-triphosphate = RNA(n+1) + diphosphate. In terms of biological role, DNA-dependent RNA polymerase catalyzes the transcription of DNA into RNA using the four ribonucleoside triphosphates as substrates. The chain is DNA-directed RNA polymerase subunit beta from Staphylococcus saprophyticus subsp. saprophyticus (strain ATCC 15305 / DSM 20229 / NCIMB 8711 / NCTC 7292 / S-41).